The primary structure comprises 245 residues: Phycocyanobilin:ferredoxin oxidoreductase (245 aa).

It belongs to the HY2 family.

It catalyses the reaction (2R,3Z)-phycocyanobilin + 4 oxidized [2Fe-2S]-[ferredoxin] = biliverdin IXalpha + 4 reduced [2Fe-2S]-[ferredoxin] + 4 H(+). Functionally, catalyzes the four-electron reduction of biliverdin IX-alpha (2-electron reduction at both the A and D rings); the reaction proceeds via an isolatable 2-electron intermediate, 181,182-dihydrobiliverdin. The protein is Phycocyanobilin:ferredoxin oxidoreductase of Rippkaea orientalis (strain PCC 8801 / RF-1) (Cyanothece sp. (strain PCC 8801)).